We begin with the raw amino-acid sequence, 326 residues long: Ig gamma-1 chain C region (326 aa).

Residues 1–97 (AETTAPSVYP…ASSTKVDKKI (97 aa)) form a CH1 region. Cys-27 and Cys-82 are disulfide-bonded. The tract at residues 98–112 (VPRNCGGDCKPCICT) is hinge. Residues 113–219 (GSEVSSVFIF…PIEKTISKPE (107 aa)) are CH2. 2 disulfides stabilise this stretch: Cys-140/Cys-200 and Cys-246/Cys-304. Asn-176 carries an N-linked (GlcNAc...) asparagine glycan. A CH3 region spans residues 220 to 326 (GRTQVPHVYT…EKSLSHSPGK (107 aa)).

The protein is Ig gamma-1 chain C region of Rattus norvegicus (Rat).